The primary structure comprises 258 residues: 5'-nucleotidase SurE (258 aa).

A divalent metal cation-binding residues include D9, D10, S42, and N96.

Belongs to the SurE nucleotidase family. The cofactor is a divalent metal cation.

Its subcellular location is the cytoplasm. The enzyme catalyses a ribonucleoside 5'-phosphate + H2O = a ribonucleoside + phosphate. Nucleotidase that shows phosphatase activity on nucleoside 5'-monophosphates. This chain is 5'-nucleotidase SurE, found in Campylobacter jejuni subsp. jejuni serotype O:6 (strain 81116 / NCTC 11828).